We begin with the raw amino-acid sequence, 152 residues long: Transcriptional regulator MraZ (152 aa).

SpoVT-AbrB domains lie at 5-52 and 81-124; these read ATMV…PLPE and ASEC…DEQT.

This sequence belongs to the MraZ family. As to quaternary structure, forms oligomers.

Its subcellular location is the cytoplasm. It is found in the nucleoid. Negatively regulates its own expression and that of the subsequent genes in the proximal part of the division and cell wall (dcw) gene cluster. Acts by binding directly to DNA. May also regulate the expression of genes outside the dcw cluster. This Yersinia pestis bv. Antiqua (strain Antiqua) protein is Transcriptional regulator MraZ.